A 505-amino-acid chain; its full sequence is Maturase K (505 aa).

Belongs to the intron maturase 2 family. MatK subfamily.

The protein localises to the plastid. The protein resides in the chloroplast. Its function is as follows. Usually encoded in the trnK tRNA gene intron. Probably assists in splicing its own and other chloroplast group II introns. This Coffea arabica (Arabian coffee) protein is Maturase K.